Here is a 250-residue protein sequence, read N- to C-terminus: MTETESQKQIKLEICIDNLESAENAVAGGADRLEVCSALQLGGLTPSVGFVSILSYKYPDIPLYCMIRQRAGDFVYNEDEMAANMEDVEWLKKAGATGFVFGALTSAGSLDRTSCQSIIETARPHPVTFHRAIDVAYDWKTCLEDAIDVGFKAVLTSGQEPSALDGVYIIREMQELHKGKIDVLAGCGVNSSNVANLVEWTKCHWYHASASVAKKNAPLNKVSMGKQDNQPSRVTSLEEVRMLKATLAPV.

Belongs to the CutC family.

In terms of biological role, involved in copper homeostasis. Affects body morphology and length, egg laying and brood size. In Caenorhabditis elegans, this protein is Copper homeostasis protein cutC homolog (cutc-1).